The primary structure comprises 269 residues: Shikimate dehydrogenase (NADP(+)) (269 aa).

Shikimate is bound by residues T22–S24 and T68. The active-site Proton acceptor is K72. Shikimate is bound by residues N93 and D104. Residues G128–A132, N152–R157, and F210 contribute to the NADP(+) site. Y212 contributes to the shikimate binding site. G233 lines the NADP(+) pocket.

The protein belongs to the shikimate dehydrogenase family. As to quaternary structure, homodimer.

The catalysed reaction is shikimate + NADP(+) = 3-dehydroshikimate + NADPH + H(+). It functions in the pathway metabolic intermediate biosynthesis; chorismate biosynthesis; chorismate from D-erythrose 4-phosphate and phosphoenolpyruvate: step 4/7. In terms of biological role, involved in the biosynthesis of the chorismate, which leads to the biosynthesis of aromatic amino acids. Catalyzes the reversible NADPH linked reduction of 3-dehydroshikimate (DHSA) to yield shikimate (SA). The polypeptide is Shikimate dehydrogenase (NADP(+)) (Saccharolobus islandicus (strain Y.N.15.51 / Yellowstone #2) (Sulfolobus islandicus)).